The following is a 225-amino-acid chain: MDKRISIAIDGPAAAGKSTVAKVVAKQLSYVYIDTGAMYRTLTYAALEQNIDIENEEKLMEVLQSIRIEFQQGKDTQQVFLNGQDVSEVIRTPDVTNRVSIVAKHRLVREEMVRRQQELAAQGGVVMDGRDIGTHVLPNAEVKIFMLASVEERAERRHLENMRKGFSSNLEQLKKEIAQRDKLDSEREVSPLKKAEDAFELDTTSLSIEEVVRNIMAIVSEALQK.

Residue 11–19 coordinates ATP; it reads GPAAAGKST.

It belongs to the cytidylate kinase family. Type 1 subfamily.

The protein resides in the cytoplasm. It carries out the reaction CMP + ATP = CDP + ADP. It catalyses the reaction dCMP + ATP = dCDP + ADP. The chain is Cytidylate kinase from Bacillus cytotoxicus (strain DSM 22905 / CIP 110041 / 391-98 / NVH 391-98).